We begin with the raw amino-acid sequence, 218 residues long: Adenylate kinase (218 aa).

10–15 lines the ATP pocket; that stretch reads GVGKGT. Positions 30–59 are NMP; sequence STGDMLRSAIKQGTELGLKAKSFIDKGELV. AMP-binding positions include Thr-31, Arg-36, 57–59, 86–89, and Gln-93; these read ELV and GFPR. The interval 127–164 is LID; that stretch reads GRRIAPSTGKVYHVVYNPPKVEGKCDETGEDLIIREDD. ATP-binding positions include Arg-128 and 137 to 138; that span reads VY. Residues Arg-161 and Arg-172 each coordinate AMP. Gln-200 contributes to the ATP binding site.

Belongs to the adenylate kinase family. Monomer.

It localises to the cytoplasm. It carries out the reaction AMP + ATP = 2 ADP. It functions in the pathway purine metabolism; AMP biosynthesis via salvage pathway; AMP from ADP: step 1/1. Catalyzes the reversible transfer of the terminal phosphate group between ATP and AMP. Plays an important role in cellular energy homeostasis and in adenine nucleotide metabolism. This is Adenylate kinase from Chloroherpeton thalassium (strain ATCC 35110 / GB-78).